A 642-amino-acid polypeptide reads, in one-letter code: Threonine--tRNA ligase (642 aa).

One can recognise a TGS domain in the interval 1 to 61 (MPIITLPDGS…TADSELAIIT (61 aa)). Residues 243–534 (DHRKIGKQLD…LIEEYAGKFP (292 aa)) are catalytic. Residues Cys-334, His-385, and His-511 each coordinate Zn(2+).

It belongs to the class-II aminoacyl-tRNA synthetase family. In terms of assembly, homodimer. Zn(2+) serves as cofactor.

Its subcellular location is the cytoplasm. It catalyses the reaction tRNA(Thr) + L-threonine + ATP = L-threonyl-tRNA(Thr) + AMP + diphosphate + H(+). Catalyzes the attachment of threonine to tRNA(Thr) in a two-step reaction: L-threonine is first activated by ATP to form Thr-AMP and then transferred to the acceptor end of tRNA(Thr). Also edits incorrectly charged L-seryl-tRNA(Thr). The protein is Threonine--tRNA ligase of Shewanella frigidimarina (strain NCIMB 400).